The primary structure comprises 691 residues: Histone-lysine N-methyltransferase Set8 (691 aa).

The tract at residues Met-1 to Pro-29 is disordered. Low complexity predominate over residues Ala-14–Gly-27. A phosphoserine mark is found at Ser-195 and Ser-250. A Phosphothreonine modification is found at Thr-252. Ser-281 bears the Phosphoserine mark. Disordered regions lie at residues Thr-341–Leu-363, Gly-382–Ala-401, Lys-407–Gln-437, and Ala-464–Gly-516. The residue at position 344 (Thr-344) is a Phosphothreonine. Ser-346, Ser-383, Ser-388, and Ser-392 each carry phosphoserine. Composition is skewed to polar residues over residues Tyr-421–Ser-430 and Asn-471–Lys-481. The 122-residue stretch at Asp-555–Gly-676 folds into the SET domain. S-adenosyl-L-methionine-binding positions include Lys-565–Arg-567, Tyr-610, and Asn-637–His-638.

It belongs to the class V-like SAM-binding methyltransferase superfamily. Histone-lysine methyltransferase family. PR/SET subfamily.

It is found in the nucleus. Its subcellular location is the chromosome. It carries out the reaction L-lysyl(20)-[histone H4] + S-adenosyl-L-methionine = N(6)-methyl-L-lysyl(20)-[histone H4] + S-adenosyl-L-homocysteine + H(+). Histone methyltransferase that specifically monomethylates 'Lys-20' of histone H4. H4 'Lys-20' monomethylation is enriched during mitosis and represents a specific tag for epigenetic transcriptional repression. Mainly functions in euchromatin regions, thereby playing a central role in the silencing of euchromatic genes. Required for cell proliferation, possibly by contributing to the maintenance of proper higher-order structure of DNA and chromosome condensation during mitosis. The protein is Histone-lysine N-methyltransferase Set8 of Drosophila melanogaster (Fruit fly).